The sequence spans 758 residues: MDVNPTLLFLKIPAQNAISTTFPYTGDPPYSHGTGTGYTMDTVNRTHQYSEKGKWTTNTETGAPQLNPIDGPLPEDNEPSGYAQTDCVLEAMAFLEESHPGIFENSCLETMEVVQQTRVDRLTQGRQTYDWTLNRNQPAATALANTIEVFRSNGLTANESGRLIDFLKDVMESMDKEEIEITTHFQRKRRVRDNMTKKMVTQRTIGKKKQRVNKRSYLIRALTLNTMTKDAERGKLKRRAIATPGMQIRGFVYFVETLARSICEKLEQSGLPVGGNEKKAKLANVVRKMMTNSQDTELSFTITGDNTKWNENQNPRMFLAMITYITKNQPEWFRNILSIAPIMFSNKMARLGKGYMFESKRMKLRTQIPAEMLASIDLKYFNESTRKKIEKIRPLLIDGTASLSPGMMMGMFNMLSTVLGVSILNLGQKKYTKTTYWWDGLQSSDDFALIVNAPNHEGIQAGVDRFYRTCKLVGINMSKKKSYINRTGTFEFTSFFYRYGFVANFSMELPSFGVSGINESADMSIGVTVIKNNMINNDLGPATAQMALQLFIKDYRYTYRCHRGDTQIQTRRSFELKKLWEQTRSKAGLLVSDGGPNLYNIRNLHIPEVCLKWELMDEDYQGRLCNPLNPFVSHKEIESVNNAVVMPAHGPAKSMEYDAVATTHSWIPKRNRSILNTSQRGILEDEQMYQKCCNLFEKFFPSSSYRRPVGISSMVEAMVSRARIDARIDFESGRIKKEEFSEIMKICSTIEELRRQKQ.

The tract at residues 50–76 (SEKGKWTTNTETGAPQLNPIDGPLPED) is disordered. A compositionally biased stretch (polar residues) spans 55–64 (WTTNTETGAP). 2 short sequence motifs (nuclear localization signal) span residues 187–195 (RKRRVRDNM) and 203–216 (RTIG…NKRS). Positions 249-256 (RGFVYFVE) are promoter-binding site. Residues 286–483 (VRKMMTNSQD…GINMSKKKSY (198 aa)) enclose the RdRp catalytic domain.

The protein belongs to the influenza viruses polymerase PB1 family. Influenza RNA polymerase is composed of three subunits: PB1, PB2 and PA. Interacts (via N-terminus) with PA (via C-terminus). Interacts (via C-terminus) with PB2 (via N-terminus); this interaction is essential for transcription initiation. In terms of processing, phosphorylated by host PRKCA.

It localises to the host nucleus. Its subcellular location is the host cytoplasm. It catalyses the reaction RNA(n) + a ribonucleoside 5'-triphosphate = RNA(n+1) + diphosphate. In terms of biological role, RNA-dependent RNA polymerase which is responsible for replication and transcription of virus RNA segments. The transcription of viral mRNAs occurs by a unique mechanism called cap-snatching. 5' methylated caps of cellular mRNAs are cleaved after 10-13 nucleotides by PA. In turn, these short capped RNAs are used as primers by PB1 for transcription of viral mRNAs. During virus replication, PB1 initiates RNA synthesis and copy vRNA into complementary RNA (cRNA) which in turn serves as a template for the production of more vRNAs. This is RNA-directed RNA polymerase catalytic subunit from Aves (whales).